We begin with the raw amino-acid sequence, 573 residues long: 2-succinyl-5-enolpyruvyl-6-hydroxy-3-cyclohexene-1-carboxylate synthase (573 aa).

It belongs to the TPP enzyme family. MenD subfamily. As to quaternary structure, homodimer. Requires Mg(2+) as cofactor. Mn(2+) is required as a cofactor. Thiamine diphosphate serves as cofactor.

It catalyses the reaction isochorismate + 2-oxoglutarate + H(+) = 5-enolpyruvoyl-6-hydroxy-2-succinyl-cyclohex-3-ene-1-carboxylate + CO2. It participates in quinol/quinone metabolism; 1,4-dihydroxy-2-naphthoate biosynthesis; 1,4-dihydroxy-2-naphthoate from chorismate: step 2/7. Its pathway is quinol/quinone metabolism; menaquinone biosynthesis. Functionally, catalyzes the thiamine diphosphate-dependent decarboxylation of 2-oxoglutarate and the subsequent addition of the resulting succinic semialdehyde-thiamine pyrophosphate anion to isochorismate to yield 2-succinyl-5-enolpyruvyl-6-hydroxy-3-cyclohexene-1-carboxylate (SEPHCHC). In Shewanella oneidensis (strain ATCC 700550 / JCM 31522 / CIP 106686 / LMG 19005 / NCIMB 14063 / MR-1), this protein is 2-succinyl-5-enolpyruvyl-6-hydroxy-3-cyclohexene-1-carboxylate synthase.